A 466-amino-acid polypeptide reads, in one-letter code: Vimentin (466 aa).

Low complexity-rich tracts occupy residues 1–13 (MSTRSVSSSSYRR) and 20–33 (TSSRPSSNRSYVTT). A disordered region spans residues 1–33 (MSTRSVSSSSYRRMFGGSGTSSRPSSNRSYVTT). S2 carries the N-acetylserine modification. A head region spans residues 2–95 (STRSVSSSSY…FSLADAINTE (94 aa)). At S5 the chain carries Phosphoserine. S7 bears the Phosphoserine; by PKA and PKC; alternate mark. O-linked (GlcNAc) serine; alternate glycosylation is present at S7. S8 carries the phosphoserine modification. S9 and S10 each carry phosphoserine; by PKC. T20 bears the Phosphothreonine mark. S21 carries the phosphoserine; by PKC modification. Phosphoserine; by PKA and PKC is present on S25. A Phosphoserine; by PKC modification is found at S26. O-linked (GlcNAc) threonine glycosylation occurs at T33. O-linked (GlcNAc) serine; alternate glycosylation is present at S34. Phosphoserine; by PKC; alternate is present on S34. Position 39 is a phosphoserine; by CaMK2, PKA, PKC and ROCK2 (S39). At S42 the chain carries Phosphoserine; by PKC. Position 47 is a phosphoserine; by PKA (S47). S49 bears the Phosphoserine mark. Position 51 is a phosphoserine; by PKA and PKC (S51). A Phosphotyrosine modification is found at Y53. Phosphoserine occurs at positions 55 and 56. At Y61 the chain carries Phosphotyrosine. S66 is subject to Phosphoserine; by PKA and PKC. S72 bears the Phosphoserine; by AURKB and ROCK2 mark. S73 carries the phosphoserine modification. S83 carries the post-translational modification Phosphoserine; by CaMK2. S87 is subject to Phosphoserine. Residues 96-131 (FKNTRTNEKVELQELNDRFANYIDKVRFLEQQNKIL) are coil 1A. The stretch at 96–131 (FKNTRTNEKVELQELNDRFANYIDKVRFLEQQNKIL) forms a coiled coil. The region spanning 103-411 (EKVELQELND…KLLEGEESRI (309 aa)) is the IF rod domain. K104 participates in a covalent cross-link: Glycyl lysine isopeptide (Lys-Gly) (interchain with G-Cter in SUMO2). Y117 is modified (phosphotyrosine). N6-acetyllysine; alternate occurs at positions 120, 129, and 139. N6-succinyllysine; alternate is present on residues K120 and K129. Glycyl lysine isopeptide (Lys-Gly) (interchain with G-Cter in SUMO2); alternate cross-links involve residues K120, K129, and K139. Residues 132–153 (LAELEQLKGQGKSRLGDLYEEE) are linker 1. Position 144 is a phosphoserine (S144). Positions 154 to 245 (MRELRRQVDQ…KLHDEEIQEL (92 aa)) form a coiled coil. Residues 154 to 245 (MRELRRQVDQ…KLHDEEIQEL (92 aa)) are coil 1B. Residue K168 is modified to N6-acetyllysine. K188 bears the N6-acetyllysine; alternate mark. K188 carries the N6-succinyllysine; alternate modification. S214 is modified (phosphoserine). Position 223 is an N6-acetyllysine; alternate (K223). K223 participates in a covalent cross-link: Glycyl lysine isopeptide (Lys-Gly) (interchain with G-Cter in SUMO2); alternate. The residue at position 226 (S226) is a Phosphoserine. An N6-acetyllysine modification is found at K235. A linker 12 region spans residues 246–268 (QAQIQEQHVQIDVDVSKPDLTAA). K262 is covalently cross-linked (Glycyl lysine isopeptide (Lys-Gly) (interchain with G-Cter in SUMO2)). Residues 269 to 407 (LRDVRQQYES…ATYRKLLEGE (139 aa)) are coil 2. Residue K294 is modified to N6-acetyllysine; alternate. An N6-succinyllysine; alternate modification is found at K294. Residue K294 forms a Glycyl lysine isopeptide (Lys-Gly) (interchain with G-Cter in SUMO2); alternate linkage. S299 carries the phosphoserine modification. Positions 303–407 (NRNNDALRQA…ATYRKLLEGE (105 aa)) form a coiled coil. K313 is covalently cross-linked (Glycyl lysine isopeptide (Lys-Gly) (interchain with G-Cter in SUMO2)). Residue S325 is modified to Phosphoserine. The [IL]-x-C-x-x-[DE] motif motif lies at 326–329 (LTCE). Position 373 is an N6-acetyllysine; alternate (K373). A Glycyl lysine isopeptide (Lys-Gly) (interchain with G-Cter in SUMO2); alternate cross-link involves residue K373. A tail region spans residues 408-466 (ESRISLPLPTFSSLNLRETNLESLPLVDTHSKRTLLIKTVETRDGQVINETSQHHDDLE). Phosphoserine is present on residues S409, S412, S419, and S420. Position 426 is a phosphothreonine (T426). Position 430 is a phosphoserine (S430). T436 is modified (phosphothreonine). S438 carries the post-translational modification Phosphoserine. A Glycyl lysine isopeptide (Lys-Gly) (interchain with G-Cter in SUMO2) cross-link involves residue K439. K445 is subject to N6-acetyllysine; alternate. K445 is subject to N6-succinyllysine; alternate. K445 participates in a covalent cross-link: Glycyl lysine isopeptide (Lys-Gly) (interchain with G-Cter in SUMO2); alternate. A Glycyl lysine isopeptide (Lys-Gly) (interchain with G-Cter in SUMO1); alternate cross-link involves residue K445. Residues T446 and T458 each carry the phosphothreonine modification. Position 459 is a phosphoserine (S459).

It belongs to the intermediate filament family. Homomer assembled from elementary dimers. Identified in complexes that contain VIM, EZR, AHNAK, BFSP1, BFSP2, ANK2, PLEC, PRX and spectrin. Interacts with BCAS3. Interacts with LGSN. Interacts with SYNM. Interacts (via rod region) with PLEC (via CH 1 domain). Interacts with PLEC isoform 1C. Interacts with STK33. Interacts with LARP6. Interacts with RAB8B. Interacts with TOR1A; the interaction associates TOR1A with the cytoskeleton. Interacts with TOR1AIP1. Interacts with DIAPH1. Interacts with EPPK1; interaction is dependent of higher-order structure of intermediate filament. Interacts with the non-receptor tyrosine kinase SRMS; the interaction leads to phosphorylation of VIM. Interacts with NOD2. Interacts (via head region) with CORO1C. Interacts with HDGF. Interacts with PRKCE (via phorbol-ester/DAG-type 2 domain). Interacts with BFSP2. Interacts with PPL. Interacts with PKP1 and PKP2. Interacts with SCRIB (via PDZ domains); the interaction protects SCRIB from proteasomal degradation and facilitates SCRIB localization to intermediate filaments, the interaction is reduced by cell contact inhibition. Post-translationally, phosphorylation by PKN1 inhibits the formation of filaments. Filament disassembly during mitosis is promoted by phosphorylation at Ser-55 as well as by nestin. One of the most prominent phosphoproteins in various cells of mesenchymal origin. Phosphorylation is enhanced during cell division, at which time vimentin filaments are significantly reorganized. Phosphorylated at Ser-56 by CDK5 during neutrophil secretion in the cytoplasm. Phosphorylated by STK33. Phosphorylated on tyrosine residues by SRMS. S-nitrosylation is induced by interferon-gamma and oxidatively-modified low-densitity lipoprotein (LDL(ox)) possibly implicating the iNOS-S100A8/9 transnitrosylase complex. As to expression, detected in eye lens fiber cells (at protein level). Expressed in retinal lens epithelial cells (at protein level). Expressed in Langerhans cells in the epidermis (at protein level).

It is found in the cytoplasm. It localises to the cytoskeleton. The protein resides in the nucleus matrix. The protein localises to the cell membrane. Its function is as follows. Vimentins are class-III intermediate filaments found in various non-epithelial cells, especially mesenchymal cells. Vimentin is attached to the nucleus, endoplasmic reticulum, and mitochondria, either laterally or terminally. Plays a role in cell directional movement, orientation, cell sheet organization and Golgi complex polarization at the cell migration front. Protects SCRIB from proteasomal degradation and facilitates its localization to intermediate filaments in a cell contact-mediated manner. Involved with LARP6 in the stabilization of type I collagen mRNAs for CO1A1 and CO1A2. This is Vimentin from Mus musculus (Mouse).